We begin with the raw amino-acid sequence, 319 residues long: Protein-methionine methyltransferase laeA (319 aa).

The interval 269–293 (REPQSGTCSVQRENGANGDRSTLSA) is disordered. Over residues 270–293 (EPQSGTCSVQRENGANGDRSTLSA) the composition is skewed to polar residues.

It belongs to the methyltransferase superfamily. LaeA methyltransferase family. As to quaternary structure, component of the heterotrimeric velvet complex composed of laeA, veA and velB; VeA acting as a bridging protein between laeA and velB.

The protein localises to the nucleus. The enzyme catalyses L-methionyl-[protein] + S-adenosyl-L-methionine = S-methyl-L-methionyl-[protein] + S-adenosyl-L-homocysteine. In terms of biological role, methyltransferase; component of the velvet transcription factor complex that acts as a global regulator for secondary metabolite gene expression. Controls the expression of the chaetoglobosin A biosynthesis cluster via the cheR transcription factor and the subsequent production of chaetoglobosin A. Positively regulates the expression of smtA and negatively regulates the expression of velB. LaeA also regulates pigmentation and spores production. The protein is Protein-methionine methyltransferase laeA of Chaetomium globosum (strain ATCC 6205 / CBS 148.51 / DSM 1962 / NBRC 6347 / NRRL 1970) (Soil fungus).